Here is a 430-residue protein sequence, read N- to C-terminus: Flavin-dependent monooxygenase eupH (430 aa).

FAD-binding positions include 11–14 (AGIG), 33–34 (ER), Gln-43, Arg-107, Tyr-282, and Asp-306.

This sequence belongs to the aromatic-ring hydroxylase family. FAD serves as cofactor.

The protein operates within secondary metabolite biosynthesis; terpenoid biosynthesis. Its function is as follows. Flavin-dependent monooxygenase; part of the gene cluster that mediates the biosynthesis of eupenifeldin, a bistropolone meroterpenoid that acts as an antitumor agent. The first step of eupenifeldin biosynthesis is the biosynthesis of 3-methylorcinaldehyde performed by the non-reducing polyketide synthase eupA. Oxidative dearomatization of 3-methylorcinaldehyde likely catalyzed by the FAD-dependent monooxygenase eupB is followed by oxidative ring expansion by the 2-oxoglutarate-dependent dioxygenase eupC to provide the first tropolone metabolite, tropolone stipitaldehyde. In parallel, generation of sesquiterpene alpha-humulene from farnesylpyrophosphate (FPP) is catalyzed by the terpene cyclase eupE. The cytochrome P450 monooxygenase eupD then hydroxylates humulene to humulenol. The putative Diels-Alderase eupF probably catalyzes the formation of the tropolone-humulene skeleton by linking humulenol and the polyketide moiety. The short-chain dehydrogenase/reductase eupG and the flavin-dependent monooxygenase eupH are also essential for eupenifeldin biosynthesis and are likely the additional decorating enzymes of the tropolone-humulene skeleton to produce final eupenifeldin or derivatives. This Phoma sp protein is Flavin-dependent monooxygenase eupH.